Consider the following 245-residue polypeptide: Thiopurine S-methyltransferase (245 aa).

Residue 29–40 (WREKWVDGKIGF) coordinates S-adenosyl-L-methionine. Phenylalanine 40 is a binding site for substrate. Lysine 58 bears the N6-acetyllysine mark. S-adenosyl-L-methionine-binding residues include leucine 69, glutamate 90, and arginine 152.

Belongs to the class I-like SAM-binding methyltransferase superfamily. TPMT family. Monomer.

It localises to the cytoplasm. The catalysed reaction is S-adenosyl-L-methionine + a thiopurine = S-adenosyl-L-homocysteine + a thiopurine S-methylether.. The polypeptide is Thiopurine S-methyltransferase (TPMT) (Lynx rufus (Bobcat)).